A 291-amino-acid polypeptide reads, in one-letter code: ATP phosphoribosyltransferase (291 aa).

This sequence belongs to the ATP phosphoribosyltransferase family. Long subfamily. Requires Mg(2+) as cofactor.

Its subcellular location is the cytoplasm. The catalysed reaction is 1-(5-phospho-beta-D-ribosyl)-ATP + diphosphate = 5-phospho-alpha-D-ribose 1-diphosphate + ATP. It participates in amino-acid biosynthesis; L-histidine biosynthesis; L-histidine from 5-phospho-alpha-D-ribose 1-diphosphate: step 1/9. Its activity is regulated as follows. Feedback inhibited by histidine. Its function is as follows. Catalyzes the condensation of ATP and 5-phosphoribose 1-diphosphate to form N'-(5'-phosphoribosyl)-ATP (PR-ATP). Has a crucial role in the pathway because the rate of histidine biosynthesis seems to be controlled primarily by regulation of HisG enzymatic activity. In Trichlorobacter lovleyi (strain ATCC BAA-1151 / DSM 17278 / SZ) (Geobacter lovleyi), this protein is ATP phosphoribosyltransferase.